The primary structure comprises 426 residues: Eukaryotic translation initiation factor 3 subunit M (426 aa).

A PCI domain is found at 179–350 (DDEDSYRYLI…KVFLVHRTTY (172 aa)). Residues 385-401 (DVEGQREREQQELERKL) show a composition bias toward basic and acidic residues. The disordered stretch occupies residues 385–426 (DVEGQREREQQELERKLAGAGMGGGPGGDRRRQQKPRTDEDD).

This sequence belongs to the eIF-3 subunit M family. Component of the eukaryotic translation initiation factor 3 (eIF-3) complex.

Its subcellular location is the cytoplasm. Its function is as follows. Component of the eukaryotic translation initiation factor 3 (eIF-3) complex, which is involved in protein synthesis of a specialized repertoire of mRNAs and, together with other initiation factors, stimulates binding of mRNA and methionyl-tRNAi to the 40S ribosome. The eIF-3 complex specifically targets and initiates translation of a subset of mRNAs involved in cell proliferation. The sequence is that of Eukaryotic translation initiation factor 3 subunit M from Chaetomium globosum (strain ATCC 6205 / CBS 148.51 / DSM 1962 / NBRC 6347 / NRRL 1970) (Soil fungus).